A 492-amino-acid chain; its full sequence is Glutamyl-tRNA(Gln) amidotransferase subunit A (492 aa).

Active-site charge relay system residues include Lys78 and Ser158. Catalysis depends on Ser182, which acts as the Acyl-ester intermediate.

The protein belongs to the amidase family. GatA subfamily. As to quaternary structure, heterotrimer of A, B and C subunits.

The enzyme catalyses L-glutamyl-tRNA(Gln) + L-glutamine + ATP + H2O = L-glutaminyl-tRNA(Gln) + L-glutamate + ADP + phosphate + H(+). Its function is as follows. Allows the formation of correctly charged Gln-tRNA(Gln) through the transamidation of misacylated Glu-tRNA(Gln) in organisms which lack glutaminyl-tRNA synthetase. The reaction takes place in the presence of glutamine and ATP through an activated gamma-phospho-Glu-tRNA(Gln). The polypeptide is Glutamyl-tRNA(Gln) amidotransferase subunit A (Rickettsia akari (strain Hartford)).